We begin with the raw amino-acid sequence, 181 residues long: ATP synthase subunit delta (181 aa).

The protein belongs to the ATPase delta chain family. F-type ATPases have 2 components, F(1) - the catalytic core - and F(0) - the membrane proton channel. F(1) has five subunits: alpha(3), beta(3), gamma(1), delta(1), epsilon(1). F(0) has three main subunits: a(1), b(2) and c(10-14). The alpha and beta chains form an alternating ring which encloses part of the gamma chain. F(1) is attached to F(0) by a central stalk formed by the gamma and epsilon chains, while a peripheral stalk is formed by the delta and b chains.

The protein localises to the cell inner membrane. Functionally, f(1)F(0) ATP synthase produces ATP from ADP in the presence of a proton or sodium gradient. F-type ATPases consist of two structural domains, F(1) containing the extramembraneous catalytic core and F(0) containing the membrane proton channel, linked together by a central stalk and a peripheral stalk. During catalysis, ATP synthesis in the catalytic domain of F(1) is coupled via a rotary mechanism of the central stalk subunits to proton translocation. This protein is part of the stalk that links CF(0) to CF(1). It either transmits conformational changes from CF(0) to CF(1) or is implicated in proton conduction. The sequence is that of ATP synthase subunit delta from Chlorobium luteolum (strain DSM 273 / BCRC 81028 / 2530) (Pelodictyon luteolum).